Here is a 320-residue protein sequence, read N- to C-terminus: Phosphate acetyltransferase (320 aa).

This sequence belongs to the phosphate acetyltransferase and butyryltransferase family.

The protein resides in the cytoplasm. It catalyses the reaction acetyl-CoA + phosphate = acetyl phosphate + CoA. Its pathway is metabolic intermediate biosynthesis; acetyl-CoA biosynthesis; acetyl-CoA from acetate: step 2/2. This is Phosphate acetyltransferase (pta) from Mycoplasma pneumoniae (strain ATCC 29342 / M129 / Subtype 1) (Mycoplasmoides pneumoniae).